The sequence spans 715 residues: 1,4-alpha-glucan branching enzyme GlgB (715 aa).

Residue Asp396 is the Nucleophile of the active site. The active-site Proton donor is Glu449.

The protein belongs to the glycosyl hydrolase 13 family. GlgB subfamily. Monomer.

The enzyme catalyses Transfers a segment of a (1-&gt;4)-alpha-D-glucan chain to a primary hydroxy group in a similar glucan chain.. It functions in the pathway glycan biosynthesis; glycogen biosynthesis. In terms of biological role, catalyzes the formation of the alpha-1,6-glucosidic linkages in glycogen by scission of a 1,4-alpha-linked oligosaccharide from growing alpha-1,4-glucan chains and the subsequent attachment of the oligosaccharide to the alpha-1,6 position. The polypeptide is 1,4-alpha-glucan branching enzyme GlgB (Vibrio vulnificus (strain YJ016)).